The chain runs to 106 residues: Halilectin 3, beta chain (106 aa).

An N-linked (GlcNAc...) asparagine glycan is attached at N65.

As to quaternary structure, probable heterotrimer consisting of an alpha chain and two beta chains. The alpha chain can probably have different glycosylation states. In terms of processing, glycosylated.

Lectin with affinity for N-acetyl-galactosamine, carragenan and glycoprotein porcine stomach mucin (PSM). Has metal-independent hemagglutinating activity towards erythrocytes from rabbit and human. Hemagglutinating activity is not inhibited by D-galactose, D-glucose, D-mannose, D-fucose, methyl-alpha-D-galactopyranoside, methyl-alpha-D-glucopyranoside, N-acetyl-glucosamine, N-acetyl-mannosamine, D-fructose, alpha-D-lactose, beta-D-lactose, D-lactulose, D-sucrose, fucoidan or glycoproteins thyroglobulin and ovalmucoid. This is Halilectin 3, beta chain from Haliclona caerulea (Blue Caribbean sponge).